Here is a 239-residue protein sequence, read N- to C-terminus: MVKDFSAEEIIQYISDAKKSTPLKVYVNGVLGQVTFPDSFKVFGSENSKVIFCEASDWEDFYNDNKNYIEEVEIEMDRRNSAIPLKDLRNTNARIEPGAFIREHAVIEDGAVVMMGATINIGAVVGEGTMIDMNATLGGRATTGKNVHVGAGAVLAGVIEPPSASPVVIEDNVLIGANAVILEGVRVGEGAIVAAGAIVTQDVPAGAVVAGTPAKVIKQTSEVEDSKREIVSALRKLND.

Belongs to the transferase hexapeptide repeat family. DapH subfamily.

The enzyme catalyses (S)-2,3,4,5-tetrahydrodipicolinate + acetyl-CoA + H2O = L-2-acetamido-6-oxoheptanedioate + CoA. Its pathway is amino-acid biosynthesis; L-lysine biosynthesis via DAP pathway; LL-2,6-diaminopimelate from (S)-tetrahydrodipicolinate (acetylase route): step 1/3. Functionally, catalyzes the transfer of an acetyl group from acetyl-CoA to tetrahydrodipicolinate. The chain is 2,3,4,5-tetrahydropyridine-2,6-dicarboxylate N-acetyltransferase from Staphylococcus carnosus (strain TM300).